We begin with the raw amino-acid sequence, 309 residues long: Diacylglycerol kinase (309 aa).

Residues 9–140 form the DAGKc domain; sequence HEIGKVTALT…IDLGRIQDDN (132 aa). ATP-binding positions include 19-23, 76-82, and Thr101; these read NPLSG and GDGVVSN. Residues Asp226, Asp229, and Leu231 each coordinate Mg(2+). Catalysis depends on Asp285, which acts as the Proton acceptor.

The protein belongs to the diacylglycerol/lipid kinase family. The cofactor is Mg(2+).

The protein resides in the secreted. The protein localises to the cell wall. The catalysed reaction is a 1,2-diacyl-sn-glycerol + ATP = a 1,2-diacyl-sn-glycero-3-phosphate + ADP + H(+). It catalyses the reaction N-hexadecanoylsphing-4-enine + ATP = N-(hexadecanoyl)-sphing-4-enine-1-phosphate + ADP + H(+). Functionally, catalyzes the phosphorylation of diacylglycerol (DAG) into phosphatidic acid. Is involved in the biosynthesis of phosphatidylinositol mannosides (PIMs), probably via a role in the biosynthesis of phosphatidylinositol (PI), a PIM precursor, which is derived from phosphatidic acid. Is also able to phosphorylate other various amphipathic lipids of host and bacterial origin in vitro, such as ceramide. This Mycobacterium tuberculosis (strain CDC 1551 / Oshkosh) protein is Diacylglycerol kinase (dagK).